A 312-amino-acid polypeptide reads, in one-letter code: tRNA-cytidine(32) 2-sulfurtransferase (312 aa).

The short motif at 47–52 is the PP-loop motif element; it reads SGGKDS. Positions 122, 125, and 213 each coordinate [4Fe-4S] cluster.

This sequence belongs to the TtcA family. In terms of assembly, homodimer. The cofactor is Mg(2+). Requires [4Fe-4S] cluster as cofactor.

The protein localises to the cytoplasm. The enzyme catalyses cytidine(32) in tRNA + S-sulfanyl-L-cysteinyl-[cysteine desulfurase] + AH2 + ATP = 2-thiocytidine(32) in tRNA + L-cysteinyl-[cysteine desulfurase] + A + AMP + diphosphate + H(+). It functions in the pathway tRNA modification. Functionally, catalyzes the ATP-dependent 2-thiolation of cytidine in position 32 of tRNA, to form 2-thiocytidine (s(2)C32). The sulfur atoms are provided by the cysteine/cysteine desulfurase (IscS) system. In Actinobacillus succinogenes (strain ATCC 55618 / DSM 22257 / CCUG 43843 / 130Z), this protein is tRNA-cytidine(32) 2-sulfurtransferase.